The chain runs to 1436 residues: Non-structural polyprotein 1AB (1436 aa).

Positions 104 to 142 (KLIHKANALQERLRLSQEEKATLALDVQFLQHENVRLKE) form a coiled coil. The next 5 helical transmembrane spans lie at 156–176 (WIIM…YAHS), 239–259 (VFYY…LAIG), 286–306 (VLPT…TLMV), 313–333 (LLAI…LCFM), and 344–364 (GLIA…LTGT). Catalysis depends on charge relay system; for serine protease activity residues H461, D489, and S551. Positions 587–620 (VKAPSQVELLKEEIERLKAQLNSATENATTVVTQ) form a coiled coil. An O-(5'-phospho-RNA)-tyrosine modification is found at Y693. 2 disordered regions span residues 756–828 (AKPI…YSQT) and 913–934 (SKNK…EDQG). The 127-residue stretch at 1181–1307 (KHFIEFDWTR…TTPSVPDDYE (127 aa)) folds into the RdRp catalytic domain.

The protein belongs to the astroviridae polyprotein 1AB family. As to quaternary structure, monomer. Post-translationally, cleaved by the viral and host proteases. The protease is probably autocatalytically cleaved.

It is found in the host membrane. The enzyme catalyses RNA(n) + a ribonucleoside 5'-triphosphate = RNA(n+1) + diphosphate. Its function is as follows. Responsible for the cleavage of the polyprotein into functional products. Functionally, protein covalently attached to the 5' extremity of the genomic and subgenomic RNAs. It may serve as a primer for the replicase. The polypeptide is Non-structural polyprotein 1AB (ORF1) (Homo sapiens (Human)).